The sequence spans 118 residues: Large ribosomal subunit protein uL18 (118 aa).

It belongs to the universal ribosomal protein uL18 family. Part of the 50S ribosomal subunit; part of the 5S rRNA/L5/L18/L25 subcomplex. Contacts the 5S and 23S rRNAs.

Functionally, this is one of the proteins that bind and probably mediate the attachment of the 5S RNA into the large ribosomal subunit, where it forms part of the central protuberance. This Campylobacter hominis (strain ATCC BAA-381 / DSM 21671 / CCUG 45161 / LMG 19568 / NCTC 13146 / CH001A) protein is Large ribosomal subunit protein uL18.